The sequence spans 84 residues: UPF0473 protein CLJ_B2791 (84 aa).

This sequence belongs to the UPF0473 family.

In Clostridium botulinum (strain 657 / Type Ba4), this protein is UPF0473 protein CLJ_B2791.